Here is a 177-residue protein sequence, read N- to C-terminus: Bifunctional protein PyrR (177 aa).

The PRPP-binding motif lies at 99 to 111 (VILVDDVIYKGRT).

This sequence belongs to the purine/pyrimidine phosphoribosyltransferase family. PyrR subfamily.

It carries out the reaction UMP + diphosphate = 5-phospho-alpha-D-ribose 1-diphosphate + uracil. Its function is as follows. Regulates the transcription of the pyrimidine nucleotide (pyr) operon in response to exogenous pyrimidines. Functionally, also displays a weak uracil phosphoribosyltransferase activity which is not physiologically significant. The sequence is that of Bifunctional protein PyrR from Microcystis aeruginosa (strain NIES-843 / IAM M-2473).